Here is a 124-residue protein sequence, read N- to C-terminus: MATSQADARDRQFLAVIGDEDSVTGLLLAGIGHVTAPPDSQKNFLVVDNKTDNAAIEAAFDRFTTERKDIGIVLINQHIADRIRHRVDTHTAAFPTVLEIPSKDHPYDPEKDSVLRRVRRLFGE.

Belongs to the V-ATPase F subunit family. In terms of assembly, V-ATPase is a heteromultimeric enzyme composed of a peripheral catalytic V1 complex (components A to H) attached to an integral membrane V0 proton pore complex (components: a, c, c', c'', d, e, f and VOA1).

It localises to the vacuole membrane. Its function is as follows. Subunit of the V1 complex of vacuolar(H+)-ATPase (V-ATPase), a multisubunit enzyme composed of a peripheral complex (V1) that hydrolyzes ATP and a membrane integral complex (V0) that translocates protons. V-ATPase is responsible for acidifying and maintaining the pH of intracellular compartments. This is V-type proton ATPase subunit F (vma-7) from Neurospora crassa (strain ATCC 24698 / 74-OR23-1A / CBS 708.71 / DSM 1257 / FGSC 987).